We begin with the raw amino-acid sequence, 130 residues long: uncharacterized protein (130 aa).

An N-terminal signal peptide occupies residues Met-1–Ser-19.

It is found in the secreted. This is an uncharacterized protein from Homo sapiens (Human).